The chain runs to 652 residues: MTRDIVIIGGGVIGLAIAVELKLRGAEVTVICRDFQAAAAHAAAGMLAPDAEQITDGAMKSLCWRSRSLYSEWTSKLEDLTGLNTGYWPCGILAPIYEGQESKGVRVQEGEGESPAYWLEKAAIHQYQPGLGEDVVGGWWYPEDAQVNNQALARVLWAAAESLGVELKDGITVEGLLQQQGQVVGVQTNTGIIRAEHYVLATGAWANELLPLPVTPRKGQMLRLRVPESVPELPLKRVLFGKNIYIVPRRERSIIVGATSEDVGFTPHNTPAGIQTLLQGAIRLYPQLQDYPIQEFWWGFRPATPDELPILGTSHCPNLTLATGHYRNGILLAPITAALIADLIVEQKSDPLLSHFHYSRSQKQASTIPMLTHSANFSNGHTKNPPLPTLDSPLIIAGKSFHSRLMTGTGKYRSIEEMQQSVVASGCEIVTVAVRRVQTKTPGHEGLAEALDWSKIWMLPNTAGCQTAEEAIRVARLGREMAKLLGQEDNNFVKLEVIPDPKYLLPDPIGTLQAAEQLVKEGFAVLPYINADPMLAKHLEDVGCATVMPLASPIGSGQGLKTTANIQIIIENAKIPVVVDAGIGAPSEASQAMELGADALLINSAIALAQNPAAMAQAMNLATVAGRLAYLAGRMPMKTYASASSPVTGTIS.

A thiO region spans residues 1 to 366 (MTRDIVIIGG…HYSRSQKQAS (366 aa)). FAD-binding positions include 5 to 19 (IVIIGGGVIGLAIAV) and 44 to 46 (AGM). Glu52 serves as a coordination point for glycine. Val173 lines the FAD pocket. Glycine contacts are provided by Arg301 and Arg327. FAD is bound at residue 325-331 (HYRNGIL). The segment at 393–652 (PLIIAGKSFH…ASSPVTGTIS (260 aa)) is thiG. The active-site Schiff-base intermediate with DXP is the Lys494. 1-deoxy-D-xylulose 5-phosphate is bound by residues Gly555, 581–582 (AG), and 603–604 (NS).

It in the N-terminal section; belongs to the DAO family. ThiO subfamily. The protein in the C-terminal section; belongs to the ThiG family. In terms of assembly, interacts with ThiH and ThiS. The cofactor is FAD.

The protein resides in the cytoplasm. The enzyme catalyses glycine + O2 + H2O = glyoxylate + H2O2 + NH4(+). It carries out the reaction [ThiS sulfur-carrier protein]-C-terminal-Gly-aminoethanethioate + 2-iminoacetate + 1-deoxy-D-xylulose 5-phosphate = [ThiS sulfur-carrier protein]-C-terminal Gly-Gly + 2-[(2R,5Z)-2-carboxy-4-methylthiazol-5(2H)-ylidene]ethyl phosphate + 2 H2O + H(+). It functions in the pathway cofactor biosynthesis; thiamine diphosphate biosynthesis. Its function is as follows. Catalyzes the FAD-dependent oxidative deamination of glycine. Is essential for thiamine biosynthesis since the oxidation of glycine catalyzed by ThiO generates the glycine imine intermediate (dehydroglycine) required for the biosynthesis of the thiazole ring of thiamine pyrophosphate. Catalyzes the rearrangement of 1-deoxy-D-xylulose 5-phosphate (DXP) to produce the thiazole phosphate moiety of thiamine. Sulfur is provided by the thiocarboxylate moiety of the carrier protein ThiS. In vitro, sulfur can be provided by H(2)S. This Nostoc sp. (strain PCC 7120 / SAG 25.82 / UTEX 2576) protein is Bifunctional protein ThiO/ThiG (thiO/thiG).